A 125-amino-acid polypeptide reads, in one-letter code: Large ribosomal subunit protein eL8 (125 aa).

The protein belongs to the eukaryotic ribosomal protein eL8 family. In terms of assembly, part of the 50S ribosomal subunit. Probably part of the RNase P complex.

The protein localises to the cytoplasm. Its function is as follows. Multifunctional RNA-binding protein that recognizes the K-turn motif in ribosomal RNA, the RNA component of RNase P, box H/ACA, box C/D and box C'/D' sRNAs. The protein is Large ribosomal subunit protein eL8 of Metallosphaera sedula (strain ATCC 51363 / DSM 5348 / JCM 9185 / NBRC 15509 / TH2).